A 157-amino-acid polypeptide reads, in one-letter code: MAEQTEKAFQKQVGVTGCFKSKEKKAPGKSGHRFFKNVGLNFKTPKEAIDGNYVDKKCPFTGNVSIRGRILTGVVKSSKMMRTIIVRRDYLHFIPKYARYEKRHTNIPAHVSPCFRVRDGDTVIIGQCRPLSKTIRFNVLRVIPQAGATGKKSFSGF.

This sequence belongs to the universal ribosomal protein uS17 family.

In Dunaliella tertiolecta (Green alga), this protein is Small ribosomal subunit protein uS17 (RPS11).